The following is a 500-amino-acid chain: Glycerol kinase (500 aa).

Thr12 contacts ADP. Residues Thr12, Thr13, and Ser14 each contribute to the ATP site. Thr12 provides a ligand contact to sn-glycerol 3-phosphate. Residue Arg16 coordinates ADP. Arg82, Glu83, Tyr135, and Asp245 together coordinate sn-glycerol 3-phosphate. Positions 82, 83, 135, 245, and 246 each coordinate glycerol. Thr267 and Gly310 together coordinate ADP. Thr267, Gly310, Gln314, and Gly411 together coordinate ATP. ADP is bound by residues Gly411 and Asn415.

It belongs to the FGGY kinase family. As to quaternary structure, homotetramer and homodimer (in equilibrium).

It catalyses the reaction glycerol + ATP = sn-glycerol 3-phosphate + ADP + H(+). The protein operates within polyol metabolism; glycerol degradation via glycerol kinase pathway; sn-glycerol 3-phosphate from glycerol: step 1/1. Activated by phosphorylation and inhibited by fructose 1,6-bisphosphate (FBP). Functionally, key enzyme in the regulation of glycerol uptake and metabolism. Catalyzes the phosphorylation of glycerol to yield sn-glycerol 3-phosphate. This is Glycerol kinase from Clostridium perfringens (strain SM101 / Type A).